We begin with the raw amino-acid sequence, 254 residues long: Triosephosphate isomerase (254 aa).

Residue 12–14 (NWK) participates in substrate binding. Histidine 99 functions as the Electrophile in the catalytic mechanism. Glutamate 169 acts as the Proton acceptor in catalysis. Residues glycine 175, serine 214, and 235-236 (GG) each bind substrate.

This sequence belongs to the triosephosphate isomerase family. As to quaternary structure, homodimer.

It is found in the cytoplasm. The enzyme catalyses D-glyceraldehyde 3-phosphate = dihydroxyacetone phosphate. Its pathway is carbohydrate biosynthesis; gluconeogenesis. The protein operates within carbohydrate degradation; glycolysis; D-glyceraldehyde 3-phosphate from glycerone phosphate: step 1/1. In terms of biological role, involved in the gluconeogenesis. Catalyzes stereospecifically the conversion of dihydroxyacetone phosphate (DHAP) to D-glyceraldehyde-3-phosphate (G3P). This is Triosephosphate isomerase from Brucella abortus biovar 1 (strain 9-941).